The sequence spans 212 residues: Troponin I, cardiac muscle (212 aa).

A compositionally biased stretch (polar residues) spans 1 to 11 (MADRSGGSTAG). Residues 1–45 (MADRSGGSTAGDTVPAPPPVRRRSSANYRAYATEPHAKKKSKISA) form a disordered region. Position 2 is an N-acetylalanine (Ala-2). Ser-5 is subject to Phosphoserine. Phosphoserine; by PKA and PKD/PRKD1 is present on residues Ser-24 and Ser-25. Tyr-28 carries the post-translational modification Phosphotyrosine. Thr-33 carries the post-translational modification Phosphothreonine; by STK4/MST1. The tract at residues 34-81 (EPHAKKKSKISASRKLQLKTLMLQIAKQELEREAEERRGEKGRALSTR) is involved in binding TNC. 2 positions are modified to phosphoserine; by PKC/PRKCE: Ser-44 and Ser-46. The residue at position 53 (Thr-53) is a Phosphothreonine; by STK4/MST1. At Ser-79 the chain carries Phosphoserine. Thr-80 bears the Phosphothreonine mark. The interval 131 to 151 (NQKIFDLRGKFKRPTLRRVRI) is involved in binding TNC and actin. Thr-145 carries the post-translational modification Phosphothreonine; by STK4/MST1. Position 152 is a phosphoserine; by PAK3 (Ser-152). At Thr-183 the chain carries Phosphothreonine. A Phosphoserine modification is found at Ser-201.

Belongs to the troponin I family. Interacts with TRIM63. Binds to actin and tropomyosin. Interacts with STK4/MST1. In terms of processing, phosphorylated at Ser-24 and Ser-25 by PRKD1; phosphorylation reduces myofilament calcium sensitivity. Phosphorylated preferentially at Thr-33. Phosphorylation by STK4/MST1 alters its binding affinity to TNNC1 (cardiac Tn-C) and TNNT2 (cardiac Tn-T). Phosphorylated at Ser-44 and Ser-46 by PRKCE; phosphorylation increases myocardium contractile dysfunction.

Troponin I is the inhibitory subunit of troponin, the thin filament regulatory complex which confers calcium-sensitivity to striated muscle actomyosin ATPase activity. The sequence is that of Troponin I, cardiac muscle (TNNI3) from Bos taurus (Bovine).